The primary structure comprises 820 residues: DNA mismatch repair protein MutS (820 aa).

ATP is bound at residue 618–625; that stretch reads GPNMAGKS.

This sequence belongs to the DNA mismatch repair MutS family.

Functionally, this protein is involved in the repair of mismatches in DNA. It is possible that it carries out the mismatch recognition step. This protein has a weak ATPase activity. The chain is DNA mismatch repair protein MutS from Chlamydia trachomatis serovar L2b (strain UCH-1/proctitis).